Reading from the N-terminus, the 64-residue chain is Large ribosomal subunit protein bL28 (64 aa).

The interval 1–27 is disordered; the sequence is MAKRDQLTGKGPLSGNTRSHAMNHSKR.

The protein belongs to the bacterial ribosomal protein bL28 family.

In Ureaplasma parvum serovar 3 (strain ATCC 27815 / 27 / NCTC 11736), this protein is Large ribosomal subunit protein bL28.